A 176-amino-acid chain; its full sequence is Retinol-binding protein 4-B (176 aa).

Residue S1 is modified to N-acetylserine. 3 cysteine pairs are disulfide-bonded: C3/C159, C69/C173, and C119/C128. Position 97 (Q97) interacts with substrate.

This sequence belongs to the calycin superfamily. Lipocalin family.

It localises to the secreted. In terms of biological role, RBP delivers retinol from the liver stores to the peripheral tissues. In plasma, the RBP-retinol complex interacts with transthyretin, this prevents its loss by filtration through the kidney glomeruli. The chain is Retinol-binding protein 4-B (rbp4b) from Oncorhynchus mykiss (Rainbow trout).